A 125-amino-acid chain; its full sequence is uncharacterized protein (125 aa).

A helical membrane pass occupies residues 100–120 (YFKVAFALAVLTPLAIWIFYI).

Its subcellular location is the membrane. This is an uncharacterized protein from Saccharomyces cerevisiae (strain ATCC 204508 / S288c) (Baker's yeast).